Here is an 817-residue protein sequence, read N- to C-terminus: Leucine--tRNA ligase (817 aa).

The 'HIGH' region motif lies at 40–50; it reads PYPSGKLHMGH. Positions 578–582 match the 'KMSKS' region motif; that stretch reads KMSKS. Lysine 581 lines the ATP pocket.

This sequence belongs to the class-I aminoacyl-tRNA synthetase family.

It is found in the cytoplasm. It catalyses the reaction tRNA(Leu) + L-leucine + ATP = L-leucyl-tRNA(Leu) + AMP + diphosphate. In Caldicellulosiruptor saccharolyticus (strain ATCC 43494 / DSM 8903 / Tp8T 6331), this protein is Leucine--tRNA ligase.